The primary structure comprises 338 residues: GTPase Obg (338 aa).

An Obg domain is found at 1-159; it reads MSFIDEVKIN…RWIRMELKLM (159 aa). Residues 58–79 are disordered; sequence DLRQHPHQKAGRGKNGMGSDRH. The region spanning 160–331 is the OBG-type G domain; sequence ADVGLLGMPS…LLDDIAFNLW (172 aa). GTP contacts are provided by residues 166-173, 191-195, 213-216, 283-286, and 312-314; these read GMPSVGKS, FTTLK, DIPG, NKID, and SAA. Positions 173 and 193 each coordinate Mg(2+).

The protein belongs to the TRAFAC class OBG-HflX-like GTPase superfamily. OBG GTPase family. As to quaternary structure, monomer. Requires Mg(2+) as cofactor.

Its subcellular location is the cytoplasm. Functionally, an essential GTPase which binds GTP, GDP and possibly (p)ppGpp with moderate affinity, with high nucleotide exchange rates and a fairly low GTP hydrolysis rate. Plays a role in control of the cell cycle, stress response, ribosome biogenesis and in those bacteria that undergo differentiation, in morphogenesis control. This is GTPase Obg from Citrifermentans bemidjiense (strain ATCC BAA-1014 / DSM 16622 / JCM 12645 / Bem) (Geobacter bemidjiensis).